We begin with the raw amino-acid sequence, 444 residues long: Serine/threonine-protein kinase 2 (444 aa).

One can recognise a Protein kinase domain in the interval 87-444 (NRDFYHLSTG…WIDGKSTSHQ (358 aa)). ATP is bound by residues 93-101 (LSTGGYGII) and Lys118. The active-site Proton acceptor is Asp307.

It belongs to the protein kinase superfamily. Ser/Thr protein kinase family. Poxviruses subfamily. Phosphorylated in vivo. Autophosphorylated in vitro.

The protein resides in the host endoplasmic reticulum. It is found in the host endoplasmic reticulum-Golgi intermediate compartment. It catalyses the reaction L-seryl-[protein] + ATP = O-phospho-L-seryl-[protein] + ADP + H(+). The catalysed reaction is L-threonyl-[protein] + ATP = O-phospho-L-threonyl-[protein] + ADP + H(+). Essential serine-protein kinase involved in the early stage of virion morphogenesis. In Vertebrata (FPV), this protein is Serine/threonine-protein kinase 2 (OPG054).